Consider the following 744-residue polypeptide: MSENHDAVVYNTNAENGGGCPVAHRRAPHPTQGGGNRGWWPNRLNLKILAKNPAVANPLGGEFTYAEAFRTLDLAAVKQDIAAVLTTSQAWWPADYGHYGPFIIRMAWHSAGTYRISDGRGGAGAGQLRFAPLNSWPDNANLDKARRLLWPVKKKYGQKISWADLMILAGNVALESMGFETFGFAGGRVDVWEPDEDVYWGPETTWLDDERYTGDRELENPLAAVQMGLIYVNPEGPNGNPDPIAAARDIRETFRRMAMNDEETVALIAGGHTFGKTHGAANPDEHVGPEPEGAPIEEQGFGWTSTFGTGRGGDTITSGLEGAWTNTPVSWDNSFFEILFSYEWELTKSPAGANQWKPKDGAGAGTVPDAHDAAKSHAPTMLTTDLALRFDPIYEPISRRFLENPSAFADAFARAWFKLTHRDLGPVARYLGPEVPTETLLWQDPLPAVAHELIDAADVATLKGQILASGLSVSQLVSTAWASASTFRGGDKRGGANGARIRLEPQRGWEVNEPDQLAAVLRTLTRIQEVFNAAQTGGKQVSLADLIVLAGGVAVEQAAANAGFDVEVPFAPGRTDASQEQTDVESFAVLEPTADGFRNYLGKGHRLPAEYLLLDRANQLTLSAPELTVLVGGLRVLGANYQQSPLGVFTATPGSLTNDFFVNLLELGTTWKTTSEDANTFEGRDAATGKVRWTGSRADLVFGSNSELRALAEVYASDDAREKFVHDFVAAWVKVMNLDRFDLV.

The tryptophyl-tyrosyl-methioninium (Trp-Tyr) (with M-257) cross-link spans 108–231 (WHSAGTYRIS…LAAVQMGLIY (124 aa)). His-109 acts as the Proton acceptor in catalysis. The tryptophyl-tyrosyl-methioninium (Tyr-Met) (with W-108) cross-link spans 231–257 (YVNPEGPNGNPDPIAAARDIRETFRRM). His-272 is a heme b binding site. The disordered stretch occupies residues 353–372 (ANQWKPKDGAGAGTVPDAHD).

This sequence belongs to the peroxidase family. Peroxidase/catalase subfamily. As to quaternary structure, homodimer or homotetramer. Heme b serves as cofactor. Post-translationally, formation of the three residue Trp-Tyr-Met cross-link is important for the catalase, but not the peroxidase activity of the enzyme.

It carries out the reaction H2O2 + AH2 = A + 2 H2O. It catalyses the reaction 2 H2O2 = O2 + 2 H2O. Bifunctional enzyme with both catalase and broad-spectrum peroxidase activity. The chain is Catalase-peroxidase from Frankia casuarinae (strain DSM 45818 / CECT 9043 / HFP020203 / CcI3).